We begin with the raw amino-acid sequence, 239 residues long: tRNA (guanine-N(7)-)-methyltransferase (239 aa).

4 residues coordinate S-adenosyl-L-methionine: Glu69, Glu94, Asp121, and Asp144. Residue Asp144 is part of the active site. Residue Lys148 participates in substrate binding. The segment at 150 to 155 (RHNKRR) is interaction with RNA. Substrate contacts are provided by residues Asp180 and 217–220 (TKFE).

The protein belongs to the class I-like SAM-binding methyltransferase superfamily. TrmB family. In terms of assembly, monomer.

It carries out the reaction guanosine(46) in tRNA + S-adenosyl-L-methionine = N(7)-methylguanosine(46) in tRNA + S-adenosyl-L-homocysteine. The protein operates within tRNA modification; N(7)-methylguanine-tRNA biosynthesis. Catalyzes the formation of N(7)-methylguanine at position 46 (m7G46) in tRNA. In Yersinia enterocolitica serotype O:8 / biotype 1B (strain NCTC 13174 / 8081), this protein is tRNA (guanine-N(7)-)-methyltransferase.